Reading from the N-terminus, the 130-residue chain is Small ribosomal subunit protein uS8 (130 aa).

It belongs to the universal ribosomal protein uS8 family. As to quaternary structure, part of the 30S ribosomal subunit.

In terms of biological role, one of the primary rRNA binding proteins, it binds directly to 16S rRNA central domain where it helps coordinate assembly of the platform of the 30S subunit. This chain is Small ribosomal subunit protein uS8, found in Pyrococcus furiosus (strain ATCC 43587 / DSM 3638 / JCM 8422 / Vc1).